Here is a 127-residue protein sequence, read N- to C-terminus: Aspartate 1-decarboxylase (127 aa).

The active-site Schiff-base intermediate with substrate; via pyruvic acid is Ser-25. The residue at position 25 (Ser-25) is a Pyruvic acid (Ser). A substrate-binding site is contributed by Thr-57. The Proton donor role is filled by Tyr-58. 73-75 (GAA) serves as a coordination point for substrate.

The protein belongs to the PanD family. As to quaternary structure, heterooctamer of four alpha and four beta subunits. Pyruvate serves as cofactor. In terms of processing, is synthesized initially as an inactive proenzyme, which is activated by self-cleavage at a specific serine bond to produce a beta-subunit with a hydroxyl group at its C-terminus and an alpha-subunit with a pyruvoyl group at its N-terminus.

It localises to the cytoplasm. It catalyses the reaction L-aspartate + H(+) = beta-alanine + CO2. Its pathway is cofactor biosynthesis; (R)-pantothenate biosynthesis; beta-alanine from L-aspartate: step 1/1. Functionally, catalyzes the pyruvoyl-dependent decarboxylation of aspartate to produce beta-alanine. This Bacillus cereus (strain ATCC 10987 / NRS 248) protein is Aspartate 1-decarboxylase.